We begin with the raw amino-acid sequence, 429 residues long: Protein arginine N-methyltransferase 2 (429 aa).

Disordered stretches follow at residues 41–76 (PEVA…EDHE) and 137–180 (ALDS…EETP). Acidic residues predominate over residues 137–163 (ALDSDDEDDEEMAEGEEAQAEDGEEAP). A compositionally biased stretch (low complexity) spans 164–174 (ELVAAEEATQT). Residues 190-429 (LEEQVTSDKY…YRLPVCTFLG (240 aa)) form the RMT2 domain. Residues Tyr-199, Met-228, 250 to 255 (FGMGII), 271 to 273 (EAH), 308 to 309 (WQ), and Asp-328 each bind S-adenosyl-L-methionine.

This sequence belongs to the class I-like SAM-binding methyltransferase superfamily. RMT2 methyltransferase family. Monomer.

It is found in the cytoplasm. The protein localises to the nucleus. S-adenosyl-L-methionine-dependent protein-arginine N-methyltransferase that methylates the delta-nitrogen atom of arginine residues to form N5-methylarginine (type IV) in target proteins. Monomethylates ribosomal protein L12. The protein is Protein arginine N-methyltransferase 2 of Neurospora crassa (strain ATCC 24698 / 74-OR23-1A / CBS 708.71 / DSM 1257 / FGSC 987).